The following is a 245-amino-acid chain: Balbiani ring A 28 kDa protein (245 aa).

The first 16 residues, 1–16, serve as a signal peptide directing secretion; it reads MKSIIKHILFVVLLIS. Residues S33, S40, S92, S93, and S115 each carry the phosphoserine modification.

Salivary gland.

It is found in the secreted. Used by the larvae to construct a supramolecular structure, the larval tube. The chain is Balbiani ring A 28 kDa protein from Chironomus thummi thummi (Midge).